The chain runs to 272 residues: ATP-dependent Clp protease proteolytic subunit, mitochondrial (272 aa).

A mitochondrion-targeting transit peptide spans Met-1 to Phe-52. Ser-149 serves as the catalytic Nucleophile. Residue His-174 is part of the active site. Lys-196 bears the N6-succinyllysine mark. Lys-207 bears the N6-acetyllysine mark. Positions Val-240 to Thr-272 are disordered.

Belongs to the peptidase S14 family. As to quaternary structure, fourteen CLPP subunits assemble into 2 heptameric rings which stack back to back to give a disk-like structure with a central cavity. Component of the ClpXP complex formed by the assembly of two CLPP heptameric rings with two CLPX hexameric rings, giving rise to a symmetrical structure with two central CLPP rings flanked by a CLPX ring at either end of the complex. As to expression, detected in liver (at protein level). High levels found in heart, liver and skeletal muscle.

It is found in the mitochondrion matrix. The catalysed reaction is Hydrolysis of proteins to small peptides in the presence of ATP and magnesium. alpha-casein is the usual test substrate. In the absence of ATP, only oligopeptides shorter than five residues are hydrolyzed (such as succinyl-Leu-Tyr-|-NHMec, and Leu-Tyr-Leu-|-Tyr-Trp, in which cleavage of the -Tyr-|-Leu- and -Tyr-|-Trp bonds also occurs).. Its function is as follows. Protease component of the ClpXP complex that cleaves peptides and various proteins in an ATP-dependent process. Has low peptidase activity in the absence of CLPX. The ClpXP complex can degrade CSN1S1, CSN2 and CSN3, as well as synthetic peptides (in vitro) and may be responsible for a fairly general and central housekeeping function rather than for the degradation of specific substrates. Cleaves PINK1 in the mitochondrion. The chain is ATP-dependent Clp protease proteolytic subunit, mitochondrial from Mus musculus (Mouse).